The chain runs to 690 residues: MTLVMSPDSSYGRYDAQPPVDGGMVNPVHREREPELHIEFDGTTVLCRVCGDKASGFHYGVHSCEGCKGFFRRSIQQKIQYRPCTKNQQCSILRINRNRCQYCRLKKCIAVGMSRDAVRFGRVPKREKARILAAMQQSSSSRAHEQAAAAELDDAPRLLARVVRAHLDTCEFTRDRVAAMRARARDCPTYSQPTLACPLNPAPELQSEKEFSQRFAHVIRGVIDFAGLIPGFQLLTQDDKFTLLKSGLFDALFVRLICMFDAPLNSIICLNGQLMKRDSIQSGANARFLVDSTFKFAERMNSMNLTDAEIGLFCAIVLITPDRPGLRNIELVERMHARLKSCLQTVIAQNRADRPGFLRELMDTLPDLRTLSTLHTEKLVVFRTEHKELLRQQMWGDEEVCPWADSGVDDSARSPLGSVSSSESGEAPSDCGTPLLAATLAGRRRLDSRGSVDEEALGVAHLAHNGLTVTPVRPPPRYRKLDSPTDSGIESGNEKHERIVGPGSGCSSPRSSLEEHMEDRRPLAADDMPVLKRVLQAPPLYDASSLMDEAYKPHKKFRAMRRDTGEAEARPMRPTPSPQPMHPHPGSPAHPAHPAHSPRPLRAPLSSTHSVLAKSLMEGPRMTPEQLKRTDIIQQYMRRGEAGEECRAGLLLYRGASPLQVDVADAPQPLNLSKKSPSPPRSFMPPMLEA.

The segment at residues 44–120 (TVLCRVCGDK…VGMSRDAVRF (77 aa)) is a DNA-binding region (nuclear receptor). 2 consecutive NR C4-type zinc fingers follow at residues 47-67 (CRVCGDKASGFHYGVHSCEGC) and 84-108 (CTKNQQCSILRINRNRCQYCRLKKC). Residues 154 to 401 (DAPRLLARVV…QQMWGDEEVC (248 aa)) form the NR LBD domain. Disordered stretches follow at residues 411 to 434 (SARSPLGSVSSSESGEAPSDCGTP), 467 to 516 (LTVT…LEEH), 562 to 604 (RDTG…LRAP), and 666 to 690 (APQPLNLSKKSPSPPRSFMPPMLEA). A compositionally biased stretch (low complexity) spans 414 to 434 (SPLGSVSSSESGEAPSDCGTP). The span at 562-571 (RDTGEAEARP) shows a compositional bias: basic and acidic residues. Pro residues predominate over residues 573-588 (RPTPSPQPMHPHPGSP). 2 stretches are compositionally biased toward low complexity: residues 589 to 604 (AHPAHPAHSPRPLRAP) and 667 to 676 (PQPLNLSKKS).

It belongs to the nuclear hormone receptor family. NR1 subfamily.

Its subcellular location is the nucleus. In terms of biological role, orphan receptor possibly involved in the regulation of genes in the ecdysteroid cascade. In Choristoneura fumiferana (Spruce budworm moth), this protein is Ecdysone-inducible protein E75 (E75).